The following is a 542-amino-acid chain: Putative leucine aminopeptidase 1 (542 aa).

Positions 294 and 299 each coordinate Mn(2+). Lysine 323 is an active-site residue. The Mn(2+) site is built by aspartate 336, aspartate 396, and glutamate 398. Arginine 400 is an active-site residue.

The protein belongs to the peptidase M17 family. In terms of assembly, homohexamer (dimer of homotrimers). Mn(2+) is required as a cofactor.

It is found in the cytoplasm. It carries out the reaction Release of an N-terminal amino acid, Xaa-|-Yaa-, in which Xaa is preferably Leu, but may be other amino acids including Pro although not Arg or Lys, and Yaa may be Pro. Amino acid amides and methyl esters are also readily hydrolyzed, but rates on arylamides are exceedingly low.. The enzyme catalyses Release of N-terminal proline from a peptide.. In terms of biological role, presumably involved in the processing and regular turnover of intracellular proteins. Catalyzes the removal of unsubstituted N-terminal amino acids from various peptides. This chain is Putative leucine aminopeptidase 1, found in Oryza sativa subsp. japonica (Rice).